The following is a 142-amino-acid chain: Alpha-lactalbumin (142 aa).

Residues Met-1–Ala-19 form the signal peptide. The C-type lysozyme domain occupies Glu-20 to Leu-142. 4 disulfide bridges follow: Cys-25/Cys-139, Cys-47/Cys-130, Cys-80/Cys-96, and Cys-92/Cys-110. N-linked (GlcNAc...) asparagine glycosylation is found at Asn-64 and Asn-93. Positions 98, 101, 103, 106, and 107 each coordinate Ca(2+).

The protein belongs to the glycosyl hydrolase 22 family. In terms of assembly, lactose synthase (LS) is a heterodimer of a catalytic component, beta1,4-galactosyltransferase (beta4Gal-T1) and a regulatory component, alpha-lactalbumin (LA). Mammary gland specific. Secreted in milk.

Its subcellular location is the secreted. Its function is as follows. Regulatory subunit of lactose synthase, changes the substrate specificity of galactosyltransferase in the mammary gland making glucose a good acceptor substrate for this enzyme. This enables LS to synthesize lactose, the major carbohydrate component of milk. In other tissues, galactosyltransferase transfers galactose onto the N-acetylglucosamine of the oligosaccharide chains in glycoproteins. The chain is Alpha-lactalbumin (LALBA) from Bos mutus grunniens (Wild yak).